Here is a 276-residue protein sequence, read N- to C-terminus: Cytoskeleton protein RodZ (276 aa).

Residues 1 to 110 (MTSMRKKTIG…SSKKKKKKTS (110 aa)) are Cytoplasmic-facing. The chain crosses the membrane as a helical; Signal-anchor for type II membrane protein span at residues 111–131 (FLPLFYFILFALSILIFVTYY). Over 132–276 (VWNYIQTQPE…GQITVTFTKN (145 aa)) the chain is Extracellular.

It belongs to the RodZ family. As to quaternary structure, interacts with MltG and MreC in the elongasome. Interacts with KhpB (also called EloR/Jag).

Its subcellular location is the cell membrane. Cytoskeletal protein that is involved in cell-shape control through regulation of the length of the long axis. Probably part of the elongasome which synthesizes peripheral peptidoglycan. This is Cytoskeleton protein RodZ from Streptococcus pneumoniae (strain ATCC BAA-255 / R6).